Reading from the N-terminus, the 114-residue chain is Small ribosomal subunit protein bS6 (114 aa).

It belongs to the bacterial ribosomal protein bS6 family.

Binds together with bS18 to 16S ribosomal RNA. The polypeptide is Small ribosomal subunit protein bS6 (Phocaeicola vulgatus (strain ATCC 8482 / DSM 1447 / JCM 5826 / CCUG 4940 / NBRC 14291 / NCTC 11154) (Bacteroides vulgatus)).